The sequence spans 361 residues: tRNA-specific 2-thiouridylase MnmA (361 aa).

ATP-binding positions include 8 to 15 and methionine 34; that span reads GMSGGVDS. The interval 94–96 is interaction with target base in tRNA; sequence NPD. Cysteine 99 acts as the Nucleophile in catalysis. Cysteines 99 and 195 form a disulfide. Residue glycine 123 participates in ATP binding. The tract at residues 145-147 is interaction with tRNA; it reads KDQ. Cysteine 195 acts as the Cysteine persulfide intermediate in catalysis. An interaction with tRNA region spans residues 307-308; the sequence is RY.

It belongs to the MnmA/TRMU family.

It is found in the cytoplasm. The enzyme catalyses S-sulfanyl-L-cysteinyl-[protein] + uridine(34) in tRNA + AH2 + ATP = 2-thiouridine(34) in tRNA + L-cysteinyl-[protein] + A + AMP + diphosphate + H(+). In terms of biological role, catalyzes the 2-thiolation of uridine at the wobble position (U34) of tRNA, leading to the formation of s(2)U34. This Legionella pneumophila subsp. pneumophila (strain Philadelphia 1 / ATCC 33152 / DSM 7513) protein is tRNA-specific 2-thiouridylase MnmA.